Here is a 361-residue protein sequence, read N- to C-terminus: Tyrosine--tRNA ligase (361 aa).

The L-tyrosine site is built by tyrosine 36, tyrosine 162, glutamine 166, aspartate 169, and glutamine 184. The short motif at 236-240 is the 'KMSKS' region element; that stretch reads KMSKS. Lysine 239 provides a ligand contact to ATP.

This sequence belongs to the class-I aminoacyl-tRNA synthetase family. TyrS type 4 subfamily. As to quaternary structure, homodimer.

The protein resides in the cytoplasm. It carries out the reaction tRNA(Tyr) + L-tyrosine + ATP = L-tyrosyl-tRNA(Tyr) + AMP + diphosphate + H(+). In terms of biological role, catalyzes the attachment of tyrosine to tRNA(Tyr) in a two-step reaction: tyrosine is first activated by ATP to form Tyr-AMP and then transferred to the acceptor end of tRNA(Tyr). This chain is Tyrosine--tRNA ligase, found in Saccharolobus islandicus (strain Y.N.15.51 / Yellowstone #2) (Sulfolobus islandicus).